The primary structure comprises 319 residues: Malate dehydrogenase (319 aa).

NAD(+) is bound by residues 10-15 (GAGNIG) and Asp-34. Substrate is bound by residues Arg-83 and Arg-89. NAD(+)-binding positions include Asn-96 and 119 to 121 (ITN). Substrate-binding residues include Asn-121 and Arg-152. Residue His-176 is the Proton acceptor of the active site.

Belongs to the LDH/MDH superfamily. MDH type 3 family.

The catalysed reaction is (S)-malate + NAD(+) = oxaloacetate + NADH + H(+). Its function is as follows. Catalyzes the reversible oxidation of malate to oxaloacetate. The chain is Malate dehydrogenase from Francisella philomiragia subsp. philomiragia (strain ATCC 25017 / CCUG 19701 / FSC 153 / O#319-036).